We begin with the raw amino-acid sequence, 498 residues long: 3-octaprenyl-4-hydroxybenzoate carboxy-lyase (498 aa).

Residue Asn175 participates in Mn(2+) binding. Prenylated FMN is bound by residues 178 to 180 (IYR), 192 to 194 (RWL), and 197 to 198 (RG). Position 241 (Glu241) interacts with Mn(2+). Asp290 acts as the Proton donor in catalysis.

The protein belongs to the UbiD family. Homohexamer. Prenylated FMN is required as a cofactor. The cofactor is Mn(2+).

The protein localises to the cell membrane. The catalysed reaction is a 4-hydroxy-3-(all-trans-polyprenyl)benzoate + H(+) = a 2-(all-trans-polyprenyl)phenol + CO2. Its pathway is cofactor biosynthesis; ubiquinone biosynthesis. Catalyzes the decarboxylation of 3-octaprenyl-4-hydroxy benzoate to 2-octaprenylphenol, an intermediate step in ubiquinone biosynthesis. The chain is 3-octaprenyl-4-hydroxybenzoate carboxy-lyase from Pectobacterium atrosepticum (strain SCRI 1043 / ATCC BAA-672) (Erwinia carotovora subsp. atroseptica).